A 628-amino-acid polypeptide reads, in one-letter code: MSLGCITPLASAMVGPKLVRPLIHHNPLFHHKPLNRPYLQTKIPLRSRVAQNPINMALITTDEGITRRIGNHHPNLWDDDFIQSLSKAYEAPSYGERAEKLIKDVRDMFNALPLHSSSADDLIQHLSLVDSVERLGIDRHFQNEIKTALDYVYRYWSDAGIGCGRESTHADLNTTALGFRILRLHRYSVSSDVLQQFVLRDGPFLDSNNQPNEDDIKNILNLFRGSLIAFPGENVLDDAKSFTMTYLKQVLPKISNLNLSREIKFNLEYGWHTNVPRLEARTYIDIYGEDSSWASKSINNIFYTKLLELAKLDFNIIQSLQQQELQILSRWWMESDLGKLDFARHRHVEYYLWAATGCIEPKYSAFRIGFAKLSALVTYLDDMYDTYDFDEIKIFTKAIKRWDASIIKGLPEFMKVAFKAFDEAVKDMAQEAKKTQGRDTLDYARKAWEVYIDAYMKEAEWLATGYMPSLEEYLENGKVSAGSRVVTLQPILSLDVPLSDDILKEIDYPSRFDELLCLTLRLRGDTRTFKAEADRGEVVSCITCYMKDHPGSNEEDALNYLNSLIDERLKELNWEYLKTDNVPIISKGNAYNLSKGLQLLYKERDGFTVFSIETKNFIYRMMIGSIPI.

The transit peptide at 1-46 (MSLGCITPLASAMVGPKLVRPLIHHNPLFHHKPLNRPYLQTKIPLR) directs the protein to the chloroplast. Residues aspartate 381, aspartate 385, and glutamate 532 each contribute to the Mg(2+) site. Residues 381–385 (DDMYD) carry the DDXXD motif motif.

It belongs to the terpene synthase family. Tpsa subfamily. Requires Mg(2+) as cofactor. The cofactor is Mn(2+).

The protein resides in the plastid. It is found in the chloroplast. The enzyme catalyses (2E)-geranyl diphosphate = alpha-pinene + diphosphate. It functions in the pathway secondary metabolite biosynthesis; terpenoid biosynthesis. Its function is as follows. Monoterpene synthase involved in the biosynthesis of volatile compounds. Mediates the conversion of (2E)-geranyl diphosphate (GPP) into alpha-pinene. The protein is Alpha pinene synthase, chloroplastic of Chamaecyparis formosensis (Formosan cypress).